The following is a 523-amino-acid chain: Magnesium/proton exchanger 1 (523 aa).

The next 11 helical transmembrane spans lie at 24–44 (LLPIGVRAFIYTAVLAYCFIG), 88–108 (IADVALLAFGTSFPQISLATI), 125–145 (GTLVGSAAFDLFPIHAVCVVM), 157–177 (LGVWLVELFWSFWAYIWLYII), 185–205 (VITLWEALLTVLQYGLLLLHA), 325–345 (VIGISWNLIIAPWKMLFAFVP), 349–369 (IAHGWIAFICSLIFISGIAYG), 377–397 (ISCVTGVSPYVIAFTALAAGT), 428–448 (VNIYVGIGVPWLVDTMYNYFV), 461–481 (LSFSLLVFFATSFGCITVLVL), and 495–515 (MWAWATSVYFMILWVVFVVLS).

The protein belongs to the Ca(2+):cation antiporter (CaCA) (TC 2.A.19) family. MHX subfamily.

The protein resides in the vacuole membrane. Functionally, vacuolar transporter that exchanges protons with Mg(2+), Zn(2+) and Fe(2+) ions. May control the partitioning of Mg(2+) and Zn(2+) between plant organs. The sequence is that of Magnesium/proton exchanger 1 (MHX1) from Oryza sativa subsp. japonica (Rice).